A 436-amino-acid polypeptide reads, in one-letter code: Ribulose bisphosphate carboxylase large chain (436 aa).

Substrate contacts are provided by Asn104 and Thr154. Residue Lys156 is the Proton acceptor of the active site. Lys158 is a substrate binding site. The Mg(2+) site is built by Lys182, Asp184, and Glu185. Lys182 bears the N6-carboxylysine mark. The active-site Proton acceptor is His275. Arg276, His308, and Ser360 together coordinate substrate.

Belongs to the RuBisCO large chain family. Type I subfamily. Heterohexadecamer of 8 large chains and 8 small chains; disulfide-linked. The disulfide link is formed within the large subunit homodimers. Requires Mg(2+) as cofactor. In terms of processing, the disulfide bond which can form in the large chain dimeric partners within the hexadecamer appears to be associated with oxidative stress and protein turnover.

It localises to the plastid. The protein resides in the chloroplast. It carries out the reaction 2 (2R)-3-phosphoglycerate + 2 H(+) = D-ribulose 1,5-bisphosphate + CO2 + H2O. The catalysed reaction is D-ribulose 1,5-bisphosphate + O2 = 2-phosphoglycolate + (2R)-3-phosphoglycerate + 2 H(+). In terms of biological role, ruBisCO catalyzes two reactions: the carboxylation of D-ribulose 1,5-bisphosphate, the primary event in carbon dioxide fixation, as well as the oxidative fragmentation of the pentose substrate in the photorespiration process. Both reactions occur simultaneously and in competition at the same active site. The polypeptide is Ribulose bisphosphate carboxylase large chain (Euglena anabaena (Euglenaria anabaena)).